The chain runs to 621 residues: Intermediate filament protein ifc-2 (621 aa).

A head region spans residues 20-55 (SGAYTSGFGGLVSGMSSAGAICTTQIRDAREREKRE). One can recognise an IF rod domain in the interval 52–400 (EKREIGLLND…VLLNGANVTT (349 aa)). A coil 1A region spans residues 56–87 (IGLLNDRLADYIEKVRFLEAQNQCLSHDIDIL). The interval 88-100 (RRGFSGGGHVSGL) is linker 1. The tract at residues 101-238 (YDTEIAQAKR…TENSTRIEQE (138 aa)) is coil 1B. Residues 239 to 256 (LVFIRRDTTAENRDYFRH) form a linker 12 region. The coil 2 stretch occupies residues 257–400 (ELQAAIRDIR…VLLNGANVTT (144 aa)). The interval 401-549 (YVSNTHPSGV…RVDVGGFRVE (149 aa)) is tail. The region spanning 508 to 621 (SGRSFHSWYL…EERAWFVYLN (114 aa)) is the LTD domain.

Belongs to the intermediate filament family.

It is found in the cytoplasm. Functionally, cytoplasmic intermediate filaments provide mechanical strength to cells. The polypeptide is Intermediate filament protein ifc-2 (Caenorhabditis briggsae).